The chain runs to 186 residues: Large ribosomal subunit protein uL22 (186 aa).

2 stretches are compositionally biased toward basic and acidic residues: residues 157 to 167 (VSKATDDEPTK) and 177 to 186 (RQKEKMLRSE). The interval 157 to 186 (VSKATDDEPTKKKLSKKKLQRQKEKMLRSE) is disordered.

It belongs to the universal ribosomal protein uL22 family.

The protein is Large ribosomal subunit protein uL22 (RpL17) of Drosophila yakuba (Fruit fly).